Reading from the N-terminus, the 622-residue chain is 1-deoxy-D-xylulose-5-phosphate synthase (622 aa).

Residues His80 and 121 to 123 (GHS) contribute to the thiamine diphosphate site. Asp152 provides a ligand contact to Mg(2+). Residues 153-154 (GA), Asn181, Tyr288, and Glu370 contribute to the thiamine diphosphate site. Position 181 (Asn181) interacts with Mg(2+).

It belongs to the transketolase family. DXPS subfamily. Homodimer. It depends on Mg(2+) as a cofactor. Thiamine diphosphate is required as a cofactor.

It carries out the reaction D-glyceraldehyde 3-phosphate + pyruvate + H(+) = 1-deoxy-D-xylulose 5-phosphate + CO2. Its pathway is metabolic intermediate biosynthesis; 1-deoxy-D-xylulose 5-phosphate biosynthesis; 1-deoxy-D-xylulose 5-phosphate from D-glyceraldehyde 3-phosphate and pyruvate: step 1/1. Functionally, catalyzes the acyloin condensation reaction between C atoms 2 and 3 of pyruvate and glyceraldehyde 3-phosphate to yield 1-deoxy-D-xylulose-5-phosphate (DXP). The protein is 1-deoxy-D-xylulose-5-phosphate synthase of Hamiltonella defensa subsp. Acyrthosiphon pisum (strain 5AT).